A 143-amino-acid chain; its full sequence is UPF0102 protein Acid345_3985 (143 aa).

It belongs to the UPF0102 family.

This Koribacter versatilis (strain Ellin345) protein is UPF0102 protein Acid345_3985.